The primary structure comprises 241 residues: Small ribosomal subunit protein uS2 (241 aa).

It belongs to the universal ribosomal protein uS2 family.

The protein is Small ribosomal subunit protein uS2 of Cronobacter sakazakii (strain ATCC BAA-894) (Enterobacter sakazakii).